The chain runs to 590 residues: G protein-coupled receptor kinase 5 (590 aa).

The tract at residues 1-185 is N-terminal; it reads MELENIVANT…LERQPVTKNT (185 aa). The interval 20–39 is interaction with calmodulin; that stretch reads GGKRKGKSKKWKEILKFPHI. Residues 53–171 enclose the RGS domain; that stretch reads YYSLCDKQPI…LDSMYFDRFL (119 aa). Ser136 carries the post-translational modification Phosphoserine. A Protein kinase domain is found at 186–448; sequence FRQYRVLGKG…AAEVKRHPFF (263 aa). Residues 192–200 and Lys215 contribute to the ATP site; that span reads LGKGGFGEV. Asp311 acts as the Proton acceptor in catalysis. The Nuclear localization signal signature appears at 388-395; sequence RKEKVKRE. Residues 449–514 enclose the AGC-kinase C-terminal domain; it reads RNMNFKRLEA…GSVPIPWQNE (66 aa). Ser484 is subject to Phosphoserine; by autocatalysis. Thr485 is modified (phosphothreonine; by autocatalysis). Positions 546-565 are sufficient for membrane localization; the sequence is PKKGLFHRLFRRQHQSNSKS. Residues 557 to 590 form a disordered region; sequence RQHQSNSKSSPTPKTSCNHRINSNHINSNSTGSS. Low complexity predominate over residues 561 to 590; that stretch reads SNSKSSPTPKTSCNHRINSNHINSNSTGSS. At Ser579 the chain carries Phosphoserine.

The protein belongs to the protein kinase superfamily. AGC Ser/Thr protein kinase family. GPRK subfamily. Interacts with ST13 (via the C-terminus 303-319 AA). Interacts with TP53/p53. Interacts with HTR4 (via C-terminus 330-346 AA); this interaction is promoted by 5-HT (serotonin). Interacts with HDAC5. Interacts with GIT1. In terms of processing, autophosphorylated. Autophosphorylation may play a critical role in the regulation of GRK5 kinase activity.

Its subcellular location is the cytoplasm. It is found in the nucleus. The protein localises to the cell membrane. It catalyses the reaction [G-protein-coupled receptor] + ATP = [G-protein-coupled receptor]-phosphate + ADP + H(+). Inhibited by calmodulin with an IC(50) of 50 nM. Calmodulin inhibits GRK5 association with receptor and phospholipid. Functionally, serine/threonine kinase that phosphorylates preferentially the activated forms of a variety of G-protein-coupled receptors (GPCRs). Such receptor phosphorylation initiates beta-arrestin-mediated receptor desensitization, internalization, and signaling events leading to their down-regulation. Phosphorylates a variety of GPCRs, including adrenergic receptors, muscarinic acetylcholine receptors (more specifically Gi-coupled M2/M4 subtypes), dopamine receptors and opioid receptors. In addition to GPCRs, also phosphorylates various substrates: Hsc70-interacting protein/ST13, TP53/p53, HDAC5, and arrestin-1/ARRB1. Phosphorylation of ARRB1 by GRK5 inhibits G-protein independent MAPK1/MAPK3 signaling downstream of 5HT4-receptors. Phosphorylation of HDAC5, a repressor of myocyte enhancer factor 2 (MEF2) leading to nuclear export of HDAC5 and allowing MEF2-mediated transcription. Phosphorylation of TP53/p53, a crucial tumor suppressor, inhibits TP53/p53-mediated apoptosis. Phosphorylation of ST13 regulates internalization of the chemokine receptor. Phosphorylates rhodopsin (RHO) (in vitro) and a non G-protein-coupled receptor, LRP6 during Wnt signaling (in vitro). The sequence is that of G protein-coupled receptor kinase 5 (Grk5) from Mus musculus (Mouse).